The primary structure comprises 151 residues: Arginine repressor (151 aa).

Belongs to the ArgR family.

It localises to the cytoplasm. Its pathway is amino-acid biosynthesis; L-arginine biosynthesis [regulation]. Functionally, regulates arginine biosynthesis genes. The chain is Arginine repressor from Moorella thermoacetica (strain ATCC 39073 / JCM 9320).